The sequence spans 859 residues: Envelope glycoprotein (859 aa).

Residues 1-6 (MVSIAF) constitute a propeptide that is removed on maturation. The Extracellular segment spans residues 7–614 (YGGIPGGIST…KDLWSHIGNW (608 aa)). N-linked (GlcNAc...) asparagine; by host glycosylation is found at asparagine 40, asparagine 112, asparagine 141, asparagine 148, asparagine 186, asparagine 214, asparagine 233, asparagine 244, asparagine 340, asparagine 368, asparagine 399, asparagine 406, asparagine 411, and asparagine 422. The tract at residues 446-466 (FGISAIVAAIVAATAIARSAT) is fusion peptide. N-linked (GlcNAc...) asparagine; by host glycosylation is found at asparagine 483 and asparagine 490. Residues 498–513 (LIERQIKILYAMILQT) are immunosuppression. N-linked (GlcNAc...) asparagine; by host glycosylation is found at asparagine 550 and asparagine 557. 2 coiled-coil regions span residues 576 to 624 (ILTT…SIIK) and 663 to 699 (KKFH…YYKQ). Residues 615–635 (IPGLGASIIKYIVMFLLIYLL) form a helical membrane-spanning segment. Residues 636–859 (LTSSPKILRA…TSHVSMPQYV (224 aa)) are Cytoplasmic-facing.

In terms of assembly, the mature envelope protein (Env) consists of a trimer of SU-TM heterodimers attached by noncovalent interactions or by a labile interchain disulfide bond. In terms of processing, specific enzymatic cleavages in vivo yield mature proteins. Envelope glycoproteins are synthesized as an inactive precursor that is N-glycosylated and processed likely by host cell furin or by a furin-like protease in the Golgi to yield the mature SU and TM proteins. The cleavage site between SU and TM requires the minimal sequence [KR]-X-[KR]-R.

Its subcellular location is the virion membrane. The protein localises to the host cell membrane. The surface protein (SU) attaches the virus to the host cell by binding to its receptor. This interaction triggers the refolding of the transmembrane protein (TM) and is thought to activate its fusogenic potential by unmasking its fusion peptide. Fusion occurs at the host cell plasma membrane. In terms of biological role, the transmembrane protein (TM) acts as a class I viral fusion protein. Under the current model, the protein has at least 3 conformational states: pre-fusion native state, pre-hairpin intermediate state, and post-fusion hairpin state. During viral and target cell membrane fusion, the coiled coil regions (heptad repeats) assume a trimer-of-hairpins structure, positioning the fusion peptide in close proximity to the C-terminal region of the ectodomain. The formation of this structure appears to drive apposition and subsequent fusion of viral and target cell membranes. Membranes fusion leads to delivery of the nucleocapsid into the cytoplasm. This is Envelope glycoprotein (env) from Equus asinus (Donkey).